The primary structure comprises 746 residues: Exostosin-1 (746 aa).

Over 1 to 7 (MQAKKRY) the chain is Cytoplasmic. Residues 8–28 (FILLSAGSCLALLFYFGGVQF) traverse the membrane as a helical; Signal-anchor for type II membrane protein segment. Residues 29–746 (RASRSHSRRE…RKKYRDIERL (718 aa)) are Lumenal-facing. An N-linked (GlcNAc...) asparagine glycan is attached at Asn89. 2 disulfides stabilise this stretch: Cys98–Cys103 and Cys109–Cys152. The a protein site is built by Leu166 and Tyr203. Residues Lys267, Lys269, Tyr271, and Arg280 each contribute to the UDP site. A disulfide bond links Cys298 and Cys312. A protein is bound at residue His300. UDP-binding residues include Tyr319 and Tyr324. Asn330 carries an N-linked (GlcNAc...) asparagine glycan. Disulfide bonds link Cys334-Cys355 and Cys652-Cys704. UDP contacts are provided by Arg346 and Glu349.

It belongs to the glycosyltransferase 47 family. Part of the heparan sulfate polymerase, a dimeric complex composed of EXT1 and EXT2. Could also form homooligomeric complexes. Interacts with NDST1. Post-translationally, N-glycosylated.

It is found in the golgi apparatus membrane. It localises to the golgi apparatus. The protein resides in the cis-Golgi network membrane. Its subcellular location is the endoplasmic reticulum membrane. The catalysed reaction is 3-O-{alpha-D-GlcNAc-[(1-&gt;4)-beta-D-GlcA-(1-&gt;4)-alpha-D-GlcNAc](n)-(1-&gt;4)-beta-D-GlcA-(1-&gt;3)-beta-D-Gal-(1-&gt;3)-beta-D-Gal-(1-&gt;4)-beta-D-Xyl}-L-seryl-[protein] + UDP-alpha-D-glucuronate = 3-O-{[(1-&gt;4)-beta-D-GlcA-(1-&gt;4)-alpha-D-GlcNAc](n+1)-(1-&gt;4)-beta-D-GlcA-(1-&gt;3)-beta-D-Gal-(1-&gt;3)-beta-D-Gal-(1-&gt;4)-beta-D-Xyl}-L-seryl-[protein] + UDP + H(+). It participates in protein modification; protein glycosylation. Functionally, glycosyltransferase forming with EXT2 the heterodimeric heparan sulfate polymerase which catalyzes the elongation of the heparan sulfate glycan backbone. Glycan backbone extension consists in the alternating transfer of (1-&gt;4)-beta-D-GlcA and (1-&gt;4)-alpha-D-GlcNAc residues from their respective UDP-sugar donors. Both EXT1 and EXT2 are required for the full activity of the polymerase since EXT1 bears the N-acetylglucosaminyl-proteoglycan 4-beta-glucuronosyltransferase activity within the complex while EXT2 carries the glucuronosyl-N-acetylglucosaminyl-proteoglycan 4-alpha-N-acetylglucosaminyltransferase activity. Heparan sulfate proteoglycans are ubiquitous components of the extracellular matrix and play an important role in tissue homeostasis and signaling. This is Exostosin-1 from Mus musculus (Mouse).